Here is a 496-residue protein sequence, read N- to C-terminus: Lysine--tRNA ligase (496 aa).

Mg(2+) is bound by residues E409 and E416.

Belongs to the class-II aminoacyl-tRNA synthetase family. As to quaternary structure, homodimer. It depends on Mg(2+) as a cofactor.

The protein resides in the cytoplasm. The enzyme catalyses tRNA(Lys) + L-lysine + ATP = L-lysyl-tRNA(Lys) + AMP + diphosphate. This Streptococcus thermophilus (strain ATCC BAA-491 / LMD-9) protein is Lysine--tRNA ligase.